The primary structure comprises 292 residues: 11-beta-hydroxysteroid dehydrogenase 1 (292 aa).

The Cytoplasmic segment spans residues histidine 2–tyrosine 7. The helical; Signal-anchor for type II membrane protein transmembrane segment at leucine 8–lysine 24 threads the bilayer. Residues glutamate 25 to serine 292 are Lumenal-facing. NADP(+)-binding positions include glycine 41–serine 67, threonine 92–methionine 93, and asparagine 119–isoleucine 121. An N-linked (GlcNAc...) asparagine glycan is attached at asparagine 162. Substrate is bound at residue serine 170. The Proton acceptor role is filled by tyrosine 183. Tyrosine 183–lysine 187 is an NADP(+) binding site. Residue asparagine 207 is glycosylated (N-linked (GlcNAc...) asparagine). Position 218-222 (isoleucine 218–threonine 222) interacts with NADP(+).

This sequence belongs to the short-chain dehydrogenases/reductases (SDR) family. In terms of assembly, homodimer. Detected in adrenal gland, liver, kidney, testis, and at lower levels in brain and lung (at protein level).

The protein localises to the endoplasmic reticulum membrane. It carries out the reaction an 11beta-hydroxysteroid + NADP(+) = an 11-oxosteroid + NADPH + H(+). The catalysed reaction is corticosterone + NADP(+) = 11-dehydrocorticosterone + NADPH + H(+). It catalyses the reaction a 7beta-hydroxysteroid + NADP(+) = a 7-oxosteroid + NADPH + H(+). The enzyme catalyses 7-oxocholesterol + NADPH + H(+) = 7beta-hydroxycholesterol + NADP(+). It carries out the reaction 7-oxocholesterol + NADPH + H(+) = 7alpha-hydroxycholesterol + NADP(+). The catalysed reaction is chenodeoxycholate + NADP(+) = 7-oxolithocholate + NADPH + H(+). It catalyses the reaction 7-oxolithocholate + NADPH + H(+) = ursodeoxycholate + NADP(+). The enzyme catalyses glycochenodeoxycholate + NADP(+) = 7-oxoglycolithocholate + NADPH + H(+). It carries out the reaction taurochenodeoxycholate + NADP(+) = 7-oxotaurolithocholate + NADPH + H(+). The catalysed reaction is tauroursodeoxycholate + NADP(+) = 7-oxotaurolithocholate + NADPH + H(+). It catalyses the reaction glycoursodeoxycholate + NADP(+) = 7-oxoglycolithocholate + NADPH + H(+). The enzyme catalyses 7-oxopregnenolone + NADPH + H(+) = 7beta-hydroxypregnenolone + NADP(+). It carries out the reaction 3beta,7alpha-dihydroxyandrost-5-en-17-one + NADP(+) = 3beta-hydroxy-5-androstene-7,17-dione + NADPH + H(+). The catalysed reaction is 3beta-hydroxy-5-androstene-7,17-dione + NADPH + H(+) = 3beta,7beta-dihydroxyandrost-5-en-17-one + NADP(+). It catalyses the reaction 3beta-hydroxy-5alpha-androstane-7,17-dione + NADPH + H(+) = 3beta,7beta-dihydroxy-5alpha-androstan-17-one + NADP(+). It participates in steroid metabolism. Functionally, controls the reversible conversion of biologically active glucocorticoids such as 11-dehydrocorticosterone to corticosterone in the presence of NADP(H). Participates in the corticosteroid receptor-mediated anti-inflammatory response, as well as metabolic and homeostatic processes. Bidirectional in vitro, predominantly functions as a reductase in vivo, thereby increasing the concentration of active glucocorticoids. It has broad substrate specificity, besides glucocorticoids, it accepts other steroid and sterol substrates. Interconverts 7-oxo- and 7-hydroxy-neurosteroids such as 7-oxopregnenolone and 7beta-hydroxypregnenolone, 7-oxodehydroepiandrosterone (3beta-hydroxy-5-androstene-7,17-dione) and 7beta-hydroxydehydroepiandrosterone (3beta,7beta-dihydroxyandrost-5-en-17-one), among others. Catalyzes reversibly the conversion of the major dietary oxysterol, 7-ketocholesterol (7-oxocholesterol), into the more polar 7-beta-hydroxycholesterol and 7-alpha-hhydroxycholesterol metabolites. 7-oxocholesterol is one of the most important oxysterols, it participates in several events such as induction of apoptosis, accumulation in atherosclerotic lesions, lipid peroxidation, and induction of foam cell formation. Mediates the 7-oxo reduction of 7-oxolithocholate mainly to chenodeoxycholate, and to a lesser extent to ursodeoxycholate, both in its free form and when conjugated to glycine or taurine, providing a link between glucocorticoid activation and bile acid metabolism. Catalyzes the synthesis of 7-beta-25-dihydroxycholesterol from 7-oxo-25-hydroxycholesterol in vitro, which acts as a ligand for the G-protein-coupled receptor (GPCR) Epstein-Barr virus-induced gene 2 (EBI2) and may thereby regulate immune cell migration. The chain is 11-beta-hydroxysteroid dehydrogenase 1 (HSD11B1) from Mesocricetus auratus (Golden hamster).